A 447-amino-acid polypeptide reads, in one-letter code: Methylenetetrahydrofolate--tRNA-(uracil-5-)-methyltransferase TrmFO (447 aa).

Residue 9–14 coordinates FAD; it reads GGGLAG.

Belongs to the MnmG family. TrmFO subfamily. FAD is required as a cofactor.

Its subcellular location is the cytoplasm. It catalyses the reaction uridine(54) in tRNA + (6R)-5,10-methylene-5,6,7,8-tetrahydrofolate + NADH + H(+) = 5-methyluridine(54) in tRNA + (6S)-5,6,7,8-tetrahydrofolate + NAD(+). The catalysed reaction is uridine(54) in tRNA + (6R)-5,10-methylene-5,6,7,8-tetrahydrofolate + NADPH + H(+) = 5-methyluridine(54) in tRNA + (6S)-5,6,7,8-tetrahydrofolate + NADP(+). Its function is as follows. Catalyzes the folate-dependent formation of 5-methyl-uridine at position 54 (M-5-U54) in all tRNAs. This chain is Methylenetetrahydrofolate--tRNA-(uracil-5-)-methyltransferase TrmFO, found in Paramagnetospirillum magneticum (strain ATCC 700264 / AMB-1) (Magnetospirillum magneticum).